Here is a 214-residue protein sequence, read N- to C-terminus: MSKSKEAAASSIILKYLNDQNRPYSTQDVFSNLQRDHGLGKTAVVKTMELLAQKGKIKEKVYGKQKIYFADQEQFPSVSDSELKDLDAQVTELSSKLQSSQQSCRQLESELKDLTSSLTTEEMLKEVSCLKEECDRHEHKLTNIKSATNHVTPAEKEKVYGERKHFCKEWKKRKRMATDIFDAILEGYPKSKKQFFEEVGVETDEDCNVTVPDV.

Positions 79-147 form a coiled coil; that stretch reads SDSELKDLDA…EHKLTNIKSA (69 aa). A DNA-binding region spans residues 115-179; that stretch reads TSSLTTEEML…WKKRKRMATD (65 aa).

It belongs to the HOP2 family.

It is found in the nucleus. In terms of biological role, plays an important role in meiotic recombination. Stimulates DMC1-mediated strand exchange required for pairing of homologous chromosomes during meiosis. This is Homologous-pairing protein 2 homolog (psmc3ip) from Xenopus laevis (African clawed frog).